The following is a 325-amino-acid chain: Leucine-rich repeat protein FLOR 1 (325 aa).

LRR repeat units lie at residues 65 to 88 (NRRV…QIGD), 89 to 114 (LVDL…ITKL), 115 to 140 (KNLN…ELKS), 142 to 162 (TFLD…LSQM), 163 to 185 (PKLE…SFGS), 187 to 211 (VGNV…LSKY), 213 to 233 (FNAV…FFGR), 234 to 256 (NKTT…KVKF), 257 to 280 (ARSI…ALTK), and 281 to 305 (LHLE…LLQT).

It belongs to the polygalacturonase-inhibiting protein family. As to quaternary structure, interacts with MADS domain transcription factors during flower development. Component of a complex made of FLOR1, VSP1 and AGAMOUS (AG). Binds directly with AG. In terms of tissue distribution, confined to flowers and inflorescences (e.g. inflorescence meristems, floral meristems, stamens and carpels).

The protein resides in the cytoplasm. The protein localises to the nucleus. It localises to the perinuclear region. Its subcellular location is the cell membrane. Functionally, promotes flowering transition in long days (LD). This is Leucine-rich repeat protein FLOR 1 from Arabidopsis thaliana (Mouse-ear cress).